A 394-amino-acid chain; its full sequence is Phosphopentomutase (394 aa).

Mn(2+) contacts are provided by Asp-13, Asp-286, His-291, Asp-327, His-328, and His-339.

It belongs to the phosphopentomutase family. Mn(2+) is required as a cofactor.

The protein localises to the cytoplasm. It catalyses the reaction 2-deoxy-alpha-D-ribose 1-phosphate = 2-deoxy-D-ribose 5-phosphate. The catalysed reaction is alpha-D-ribose 1-phosphate = D-ribose 5-phosphate. It functions in the pathway carbohydrate degradation; 2-deoxy-D-ribose 1-phosphate degradation; D-glyceraldehyde 3-phosphate and acetaldehyde from 2-deoxy-alpha-D-ribose 1-phosphate: step 1/2. Functionally, isomerase that catalyzes the conversion of deoxy-ribose 1-phosphate (dRib-1-P) and ribose 1-phosphate (Rib-1-P) to deoxy-ribose 5-phosphate (dRib-5-P) and ribose 5-phosphate (Rib-5-P), respectively. The sequence is that of Phosphopentomutase from Bacillus mycoides (strain KBAB4) (Bacillus weihenstephanensis).